The sequence spans 295 residues: tRNA-cytidine(32) 2-sulfurtransferase (295 aa).

The PP-loop motif signature appears at 63-68 (SGGKDS). [4Fe-4S] cluster-binding residues include Cys-138, Cys-141, and Cys-229.

Belongs to the TtcA family. As to quaternary structure, homodimer. Mg(2+) is required as a cofactor. [4Fe-4S] cluster serves as cofactor.

It is found in the cytoplasm. The enzyme catalyses cytidine(32) in tRNA + S-sulfanyl-L-cysteinyl-[cysteine desulfurase] + AH2 + ATP = 2-thiocytidine(32) in tRNA + L-cysteinyl-[cysteine desulfurase] + A + AMP + diphosphate + H(+). It functions in the pathway tRNA modification. Its function is as follows. Catalyzes the ATP-dependent 2-thiolation of cytidine in position 32 of tRNA, to form 2-thiocytidine (s(2)C32). The sulfur atoms are provided by the cysteine/cysteine desulfurase (IscS) system. In Mesorhizobium japonicum (strain LMG 29417 / CECT 9101 / MAFF 303099) (Mesorhizobium loti (strain MAFF 303099)), this protein is tRNA-cytidine(32) 2-sulfurtransferase.